We begin with the raw amino-acid sequence, 418 residues long: Replication factor C large subunit (418 aa).

47–54 (GSQGTGKT) contributes to the ATP binding site.

The protein belongs to the activator 1 small subunits family. RfcL subfamily. Heteromultimer composed of small subunits (RfcS) and large subunits (RfcL).

Functionally, part of the RFC clamp loader complex which loads the PCNA sliding clamp onto DNA. This Thermoplasma acidophilum (strain ATCC 25905 / DSM 1728 / JCM 9062 / NBRC 15155 / AMRC-C165) protein is Replication factor C large subunit.